The sequence spans 625 residues: tRNA uridine 5-carboxymethylaminomethyl modification enzyme MnmG (625 aa).

FAD-binding positions include glycine 11–glycine 16, valine 123, and serine 178. Position 271–285 (glycine 271–phenylalanine 285) interacts with NAD(+). An FAD-binding site is contributed by glutamine 368.

It belongs to the MnmG family. As to quaternary structure, homodimer. Heterotetramer of two MnmE and two MnmG subunits. It depends on FAD as a cofactor.

Its subcellular location is the cytoplasm. In terms of biological role, NAD-binding protein involved in the addition of a carboxymethylaminomethyl (cmnm) group at the wobble position (U34) of certain tRNAs, forming tRNA-cmnm(5)s(2)U34. The sequence is that of tRNA uridine 5-carboxymethylaminomethyl modification enzyme MnmG from Bacteroides fragilis (strain ATCC 25285 / DSM 2151 / CCUG 4856 / JCM 11019 / LMG 10263 / NCTC 9343 / Onslow / VPI 2553 / EN-2).